A 193-amino-acid chain; its full sequence is Superoxide dismutase [Fe] (193 aa).

Positions 27, 74, 157, and 161 each coordinate Fe cation.

This sequence belongs to the iron/manganese superoxide dismutase family. In terms of assembly, homodimer. Fe cation serves as cofactor.

The catalysed reaction is 2 superoxide + 2 H(+) = H2O2 + O2. Its function is as follows. Destroys superoxide anion radicals which are normally produced within the cells and which are toxic to biological systems. Partially complements double sodA-sodB deletions in E.coli. In Pseudomonas aeruginosa (strain ATCC 15692 / DSM 22644 / CIP 104116 / JCM 14847 / LMG 12228 / 1C / PRS 101 / PAO1), this protein is Superoxide dismutase [Fe].